The sequence spans 158 residues: S-ribosylhomocysteine lyase (158 aa).

Fe cation contacts are provided by His54, His58, and Cys124.

The protein belongs to the LuxS family. As to quaternary structure, homodimer. Fe cation serves as cofactor.

The enzyme catalyses S-(5-deoxy-D-ribos-5-yl)-L-homocysteine = (S)-4,5-dihydroxypentane-2,3-dione + L-homocysteine. Functionally, involved in the synthesis of autoinducer 2 (AI-2) which is secreted by bacteria and is used to communicate both the cell density and the metabolic potential of the environment. The regulation of gene expression in response to changes in cell density is called quorum sensing. Catalyzes the transformation of S-ribosylhomocysteine (RHC) to homocysteine (HC) and 4,5-dihydroxy-2,3-pentadione (DPD). This is S-ribosylhomocysteine lyase from Lactiplantibacillus plantarum (strain ATCC BAA-793 / NCIMB 8826 / WCFS1) (Lactobacillus plantarum).